Consider the following 483-residue polypeptide: Trimethylamine methyltransferase MttB (483 aa).

A non-standard amino acid (pyrrolysine) is located at residue pyrrolysine 334.

It belongs to the trimethylamine methyltransferase family. Can form a complex with MttC.

It catalyses the reaction Co(I)-[trimethylamine-specific corrinoid protein] + trimethylamine + H(+) = methyl-Co(III)-[trimethylamine-specific corrinoid protein] + dimethylamine. It functions in the pathway one-carbon metabolism; methanogenesis from trimethylamine. Functionally, catalyzes the transfer of a methyl group from trimethylamine to the corrinoid cofactor of MttC. The polypeptide is Trimethylamine methyltransferase MttB (mttB) (Methanosarcina thermophila).